The following is a 140-amino-acid chain: Inner membrane protein YphA (140 aa).

The Cytoplasmic segment spans residues 1 to 13 (MNTLRYFDFGAAR). A helical membrane pass occupies residues 14 to 34 (PVLLLIARIAVVLIFIIFGFP). The Periplasmic portion of the chain corresponds to 35–56 (KMMGFDGTVQYMASLGAPMPML). The chain crosses the membrane as a helical span at residues 57 to 77 (AAIIAVVMEVPAAILIVLGFF). Topologically, residues 78–79 (TR) are cytoplasmic. A helical transmembrane segment spans residues 80–100 (PLAVLFIFYTLGTAVIGHHYW). Residues 101–116 (DMTGDAVGPNMINFWK) lie on the Periplasmic side of the membrane. A helical transmembrane segment spans residues 117 to 137 (NVSIAGAFLLLAITGPGAISL). The Cytoplasmic portion of the chain corresponds to 138–140 (DRR).

The protein belongs to the DoxX family.

Its subcellular location is the cell inner membrane. The sequence is that of Inner membrane protein YphA (yphA) from Escherichia coli (strain K12).